Consider the following 489-residue polypeptide: Protein MGF 505-2R (489 aa).

The protein belongs to the asfivirus MGF 505 family.

In terms of biological role, plays a role in virus cell tropism, and may be required for efficient virus replication in macrophages. This is Protein MGF 505-2R from Ornithodoros (relapsing fever ticks).